A 512-amino-acid polypeptide reads, in one-letter code: ATP synthase subunit alpha (512 aa).

169 to 176 provides a ligand contact to ATP; sequence GDRQTGKT.

This sequence belongs to the ATPase alpha/beta chains family. F-type ATPases have 2 components, CF(1) - the catalytic core - and CF(0) - the membrane proton channel. CF(1) has five subunits: alpha(3), beta(3), gamma(1), delta(1), epsilon(1). CF(0) has three main subunits: a(1), b(2) and c(9-12). The alpha and beta chains form an alternating ring which encloses part of the gamma chain. CF(1) is attached to CF(0) by a central stalk formed by the gamma and epsilon chains, while a peripheral stalk is formed by the delta and b chains.

The protein localises to the cell inner membrane. The catalysed reaction is ATP + H2O + 4 H(+)(in) = ADP + phosphate + 5 H(+)(out). In terms of biological role, produces ATP from ADP in the presence of a proton gradient across the membrane. The alpha chain is a regulatory subunit. The polypeptide is ATP synthase subunit alpha (Rickettsia bellii (strain OSU 85-389)).